Reading from the N-terminus, the 441-residue chain is Probable indole-3-acetic acid-amido synthetase GH3.9 (441 aa).

The protein belongs to the IAA-amido conjugating enzyme family. As to expression, expressed in etiolated seedlings and roots.

May catalyze the synthesis of indole-3-acetic acid (IAA)-amino acid conjugates, providing a mechanism for the plant to cope with the presence of excess auxin. The sequence is that of Probable indole-3-acetic acid-amido synthetase GH3.9 (GH3.9) from Oryza sativa subsp. japonica (Rice).